The sequence spans 305 residues: Coenzyme PQQ synthesis protein B (305 aa).

It belongs to the PqqB family.

The protein operates within cofactor biosynthesis; pyrroloquinoline quinone biosynthesis. May be involved in the transport of PQQ or its precursor to the periplasm. In Methylobacillus flagellatus, this protein is Coenzyme PQQ synthesis protein B.